Reading from the N-terminus, the 236-residue chain is MKKTTQLYEGKAKKVFLTDDADLVIQEFKDDATAFNNKKKGSIAEKGVVNNAISSKLFTLLEAQGIRTHFVEKLSDRDMLCRYLDIIKVEVVVRNIAAGSLVKRYGFSEGTVLAMPIVEFYLKDDDLDDPLMNEAHAVALGVATLEELAFLKNRAEAINVLLKAFFAERKLKLVDFKLEFGRHNNEILLGDEISPDTCRFWDLETNEKMDKDRFRFDLGGVEDAYSEVQKRVLDLD.

Belongs to the SAICAR synthetase family.

The enzyme catalyses 5-amino-1-(5-phospho-D-ribosyl)imidazole-4-carboxylate + L-aspartate + ATP = (2S)-2-[5-amino-1-(5-phospho-beta-D-ribosyl)imidazole-4-carboxamido]succinate + ADP + phosphate + 2 H(+). Its pathway is purine metabolism; IMP biosynthesis via de novo pathway; 5-amino-1-(5-phospho-D-ribosyl)imidazole-4-carboxamide from 5-amino-1-(5-phospho-D-ribosyl)imidazole-4-carboxylate: step 1/2. In Pelodictyon phaeoclathratiforme (strain DSM 5477 / BU-1), this protein is Phosphoribosylaminoimidazole-succinocarboxamide synthase.